We begin with the raw amino-acid sequence, 289 residues long: Ribosomal RNA small subunit methyltransferase A (289 aa).

S-adenosyl-L-methionine-binding residues include Asn21, Leu23, Gly48, Glu69, Asp94, and Asn120.

It belongs to the class I-like SAM-binding methyltransferase superfamily. rRNA adenine N(6)-methyltransferase family. RsmA subfamily.

Its subcellular location is the cytoplasm. The catalysed reaction is adenosine(1518)/adenosine(1519) in 16S rRNA + 4 S-adenosyl-L-methionine = N(6)-dimethyladenosine(1518)/N(6)-dimethyladenosine(1519) in 16S rRNA + 4 S-adenosyl-L-homocysteine + 4 H(+). Functionally, specifically dimethylates two adjacent adenosines (A1518 and A1519) in the loop of a conserved hairpin near the 3'-end of 16S rRNA in the 30S particle. May play a critical role in biogenesis of 30S subunits. In Actinobacillus pleuropneumoniae serotype 3 (strain JL03), this protein is Ribosomal RNA small subunit methyltransferase A.